Here is an 898-residue protein sequence, read N- to C-terminus: Phosphoenolpyruvate carboxylase (898 aa).

Residues His-138 and Lys-561 contribute to the active site.

This sequence belongs to the PEPCase type 1 family. Mg(2+) serves as cofactor.

The enzyme catalyses oxaloacetate + phosphate = phosphoenolpyruvate + hydrogencarbonate. Its function is as follows. Forms oxaloacetate, a four-carbon dicarboxylic acid source for the tricarboxylic acid cycle. The protein is Phosphoenolpyruvate carboxylase of Streptococcus suis (strain 98HAH33).